The chain runs to 132 residues: Small ribosomal subunit protein uS8 (132 aa).

The protein belongs to the universal ribosomal protein uS8 family. In terms of assembly, part of the 30S ribosomal subunit. Contacts proteins S5 and S12.

One of the primary rRNA binding proteins, it binds directly to 16S rRNA central domain where it helps coordinate assembly of the platform of the 30S subunit. The polypeptide is Small ribosomal subunit protein uS8 (Mesorhizobium japonicum (strain LMG 29417 / CECT 9101 / MAFF 303099) (Mesorhizobium loti (strain MAFF 303099))).